Reading from the N-terminus, the 202-residue chain is MAGPSFDLEIAHPLPLAGVDEAGRGPLAGPVVAAAVILDRGRVPAGIDDSKKLGAEARADLCGKIREVAHVGVGIATVEEIDEINILWASMLAMERAVAALGVEPAMVLVDGNRCPRWTRPSQWVIGGDALCLSIAAASIVAKEERDRMMADYDVHHPGYGWAKNKGYGTPAHLDALARLGPSPLHRRSFAPVAQFSLFPAA.

The region spanning L14 to A202 is the RNase H type-2 domain. A divalent metal cation contacts are provided by D20, E21, and D111.

It belongs to the RNase HII family. Requires Mn(2+) as cofactor. Mg(2+) is required as a cofactor.

The protein localises to the cytoplasm. The enzyme catalyses Endonucleolytic cleavage to 5'-phosphomonoester.. Endonuclease that specifically degrades the RNA of RNA-DNA hybrids. The polypeptide is Ribonuclease HII (Rhizorhabdus wittichii (strain DSM 6014 / CCUG 31198 / JCM 15750 / NBRC 105917 / EY 4224 / RW1) (Sphingomonas wittichii)).